The following is a 408-amino-acid chain: MQAVTAAAAAGQLLTDTRRGPRCRARLGTTRLSWTGRFAVEAFAGQCQSSATTVMHKFSAISQAARPRRNTKRQCSDDYPALQAGCSEVNWDQNGSNANRLEEIRGDVLKKLRSFYEFCRPHTIFGTIIGITSVSLLPMKSIDDFTVTVLRGYLEALTAALCMNIYVVGLNQLYDIQIDKINKPGLPLASGEFSVATGVFLVLAFLIMSFSIGIRSGSAPLMCALIVSFLLGSAYSIEAPFLRWKRHALLAASCILFVRAILVQLAFFAHMQQHVLKRPLAATKSLVFATLFMCCFSAVIALFKDIPDVDGDRDFGIQSLSVRLGPQRVYQLCISILLTAYGAATLVGASSTNLFQKIITVSGHGLLALTLWQRAQHFEVENQARVTSFYMFIWKLFYAEYFLIPFVQ.

The transit peptide at 1–62 directs the protein to the chloroplast; that stretch reads MQAVTAAAAA…TVMHKFSAIS (62 aa). 9 consecutive transmembrane segments (helical) span residues 122–142, 156–176, 194–214, 221–241, 248–268, 286–306, 329–349, 352–372, and 386–406; these read HTIF…MKSI, ALTA…LYDI, SVAT…SIGI, LMCA…EAPF, ALLA…LAFF, LVFA…FKDI, VYQL…LVGA, TNLF…LTLW, and VTSF…LIPF.

The protein belongs to the UbiA prenyltransferase family. In terms of tissue distribution, expressed in seeds.

It localises to the plastid. The protein localises to the chloroplast membrane. It carries out the reaction homogentisate + (2E,6E,10E)-geranylgeranyl diphosphate + H(+) = 6-geranylgeranyl-2-methylbenzene-1,4-diol + CO2 + diphosphate. It functions in the pathway cofactor biosynthesis; tocopherol biosynthesis. In terms of biological role, involved in the synthesis of tocotrienol (vitamin E). Catalyzes the condensation of homogentisate and geranylgeranyl diphosphate to form 2-methyl-6-geranylgeranylbenzoquinol. Possesses low activity with phytyl diphosphate as substrate. The chain is Homogentisate geranylgeranyltransferase from Hordeum vulgare (Barley).